Reading from the N-terminus, the 319-residue chain is ATP-dependent 6-phosphofructokinase (319 aa).

Position 11 (Gly-11) interacts with ATP. 21-25 (RAVVR) contributes to the ADP binding site. Residues 72 to 73 (RC) and 102 to 105 (GNGS) each bind ATP. Residue Asn-103 participates in Mg(2+) binding. 125-127 (TID) lines the substrate pocket. Asp-127 functions as the Proton acceptor in the catalytic mechanism. Arg-154 contacts ADP. Substrate-binding positions include Arg-162 and 169–171 (MGR). ADP is bound by residues 185-187 (GAE), Arg-211, and 213-215 (KMH). Substrate-binding positions include Glu-222, Arg-243, and 249 to 252 (HIQR).

It belongs to the phosphofructokinase type A (PFKA) family. ATP-dependent PFK group I subfamily. Prokaryotic clade 'B1' sub-subfamily. Homotetramer. Mg(2+) serves as cofactor.

Its subcellular location is the cytoplasm. It catalyses the reaction beta-D-fructose 6-phosphate + ATP = beta-D-fructose 1,6-bisphosphate + ADP + H(+). Its pathway is carbohydrate degradation; glycolysis; D-glyceraldehyde 3-phosphate and glycerone phosphate from D-glucose: step 3/4. With respect to regulation, allosterically activated by ADP and other diphosphonucleosides, and allosterically inhibited by phosphoenolpyruvate. In terms of biological role, catalyzes the phosphorylation of D-fructose 6-phosphate to fructose 1,6-bisphosphate by ATP, the first committing step of glycolysis. The chain is ATP-dependent 6-phosphofructokinase from Clostridium acetobutylicum (strain ATCC 824 / DSM 792 / JCM 1419 / IAM 19013 / LMG 5710 / NBRC 13948 / NRRL B-527 / VKM B-1787 / 2291 / W).